The primary structure comprises 300 residues: Tyrosine recombinase XerC (300 aa).

The Core-binding (CB) domain occupies 2-88; it reads TQEGKLEQQF…SLRSFYTFLL (87 aa). One can recognise a Tyr recombinase domain in the interval 109-294; it reads RLPKFFYSEE…TKEHLKSTYM (186 aa). Catalysis depends on residues Arg-150, Lys-174, His-246, Arg-249, and His-272. Residue Tyr-281 is the O-(3'-phospho-DNA)-tyrosine intermediate of the active site.

The protein belongs to the 'phage' integrase family. XerC subfamily. Forms a cyclic heterotetrameric complex composed of two molecules of XerC and two molecules of XerD.

It localises to the cytoplasm. Functionally, site-specific tyrosine recombinase, which acts by catalyzing the cutting and rejoining of the recombining DNA molecules. The XerC-XerD complex is essential to convert dimers of the bacterial chromosome into monomers to permit their segregation at cell division. It also contributes to the segregational stability of plasmids. The protein is Tyrosine recombinase XerC of Listeria monocytogenes serotype 4a (strain HCC23).